A 190-amino-acid chain; its full sequence is Probable thymidylate kinase (190 aa).

7–14 contacts ATP; sequence GIDGAGKT.

Belongs to the thymidylate kinase family.

The catalysed reaction is dTMP + ATP = dTDP + ADP. The sequence is that of Probable thymidylate kinase from Thermoplasma volcanium (strain ATCC 51530 / DSM 4299 / JCM 9571 / NBRC 15438 / GSS1).